A 189-amino-acid chain; its full sequence is Photosystem I assembly protein Ycf4 (189 aa).

The next 2 helical transmembrane spans lie at 25–45 and 62–82; these read SVYF…LAGL and LVFI…SLAG.

This sequence belongs to the Ycf4 family.

It localises to the cellular thylakoid membrane. Its function is as follows. Seems to be required for the assembly of the photosystem I complex. The polypeptide is Photosystem I assembly protein Ycf4 (Synechococcus sp. (strain JA-2-3B'a(2-13)) (Cyanobacteria bacterium Yellowstone B-Prime)).